A 159-amino-acid chain; its full sequence is Phosphopantetheine adenylyltransferase (159 aa).

T10 contacts substrate. ATP-binding positions include 10–11 (TF) and H18. 3 residues coordinate substrate: K42, M74, and R88. ATP contacts are provided by residues 89–91 (GLR), E99, and 124–130 (WSFISSS).

The protein belongs to the bacterial CoaD family. As to quaternary structure, homohexamer. It depends on Mg(2+) as a cofactor.

It is found in the cytoplasm. It carries out the reaction (R)-4'-phosphopantetheine + ATP + H(+) = 3'-dephospho-CoA + diphosphate. Its pathway is cofactor biosynthesis; coenzyme A biosynthesis; CoA from (R)-pantothenate: step 4/5. Reversibly transfers an adenylyl group from ATP to 4'-phosphopantetheine, yielding dephospho-CoA (dPCoA) and pyrophosphate. In Cronobacter sakazakii (strain ATCC BAA-894) (Enterobacter sakazakii), this protein is Phosphopantetheine adenylyltransferase.